Here is a 578-residue protein sequence, read N- to C-terminus: Glutamate--tRNA ligase (578 aa).

Positions 97–107 (PNPDFVIHLGN) match the 'HIGH' region motif.

Belongs to the class-I aminoacyl-tRNA synthetase family. Glutamate--tRNA ligase type 2 subfamily.

It localises to the cytoplasm. It catalyses the reaction tRNA(Glu) + L-glutamate + ATP = L-glutamyl-tRNA(Glu) + AMP + diphosphate. In terms of biological role, catalyzes the attachment of glutamate to tRNA(Glu) in a two-step reaction: glutamate is first activated by ATP to form Glu-AMP and then transferred to the acceptor end of tRNA(Glu). This is Glutamate--tRNA ligase from Hyperthermus butylicus (strain DSM 5456 / JCM 9403 / PLM1-5).